The chain runs to 82 residues: Small ribosomal subunit protein bS16 (82 aa).

This sequence belongs to the bacterial ribosomal protein bS16 family.

In Francisella tularensis subsp. holarctica (strain FTNF002-00 / FTA), this protein is Small ribosomal subunit protein bS16.